A 368-amino-acid polypeptide reads, in one-letter code: Ribosomal RNA large subunit methyltransferase M (368 aa).

Residues S189, 222–225 (CPGG), D241, D261, and D278 contribute to the S-adenosyl-L-methionine site. The active-site Proton acceptor is the K307.

It belongs to the class I-like SAM-binding methyltransferase superfamily. RNA methyltransferase RlmE family. RlmM subfamily. Monomer.

The protein resides in the cytoplasm. The catalysed reaction is cytidine(2498) in 23S rRNA + S-adenosyl-L-methionine = 2'-O-methylcytidine(2498) in 23S rRNA + S-adenosyl-L-homocysteine + H(+). Catalyzes the 2'-O-methylation at nucleotide C2498 in 23S rRNA. This Yersinia pseudotuberculosis serotype O:1b (strain IP 31758) protein is Ribosomal RNA large subunit methyltransferase M.